The sequence spans 163 residues: Staphylokinase (163 aa).

The signal sequence occupies residues 1 to 27 (MLKRSLLFLTVLLLLFSFSSITNEVSA).

Belongs to the staphylokinase family.

The protein resides in the secreted. In terms of biological role, potent plasminogen activator that converts plasminogen into plasmin. It forms a 1:1 complex with plasmin, which in turn activates other plasminogen molecules. This chain is Staphylokinase (sak), found in Staphylococcus phage phi13 (Bacteriophage phi-13).